The primary structure comprises 264 residues: Meiotic recombination protein REC102 (264 aa).

Belongs to the TOP6B-like family. As to quaternary structure, interacts with REC104; seems to form a functional unit with REC104. REC102-REC104 interacts with SKI8-SPO11 and this interaction is required for proper subcellular location of the proteins during the initiation of recombination. Interacts with MEI4, REC114 and SPO11.

It is found in the nucleus. Functionally, required for formation of the SPO11-mediated double-strand breaks (DSBs) that initiate meiotic recombination. May mediate the interaction between SPO11 subunits during meiosis. Also needed for homolog chromosome pairing, synaptonemal complex formation, and for the proper timing of the first meiotic division. Not required for mitosis and mitotic DNA repair mechanisms. This Saccharomyces cerevisiae (strain ATCC 204508 / S288c) (Baker's yeast) protein is Meiotic recombination protein REC102.